A 431-amino-acid chain; its full sequence is Tol-Pal system protein TolB (431 aa).

Residues 1–26 (MSLMTKLGFRALVASCLITAGSAANA) form the signal peptide. The interval 406–431 (DGSAPPQILSVQGGSVREPSWGPFMQ) is disordered.

The protein belongs to the TolB family. As to quaternary structure, the Tol-Pal system is composed of five core proteins: the inner membrane proteins TolA, TolQ and TolR, the periplasmic protein TolB and the outer membrane protein Pal. They form a network linking the inner and outer membranes and the peptidoglycan layer.

It is found in the periplasm. Its function is as follows. Part of the Tol-Pal system, which plays a role in outer membrane invagination during cell division and is important for maintaining outer membrane integrity. The sequence is that of Tol-Pal system protein TolB from Burkholderia orbicola (strain MC0-3).